A 364-amino-acid polypeptide reads, in one-letter code: FNIP repeat-containing protein DDB_G0277323 (364 aa).

5 FNIP repeats span residues 57 to 98 (MNIE…DLKY), 155 to 198 (YDCL…FGWT), 214 to 244 (LRVL…FGSS), 245 to 271 (FNQV…NQPI), and 295 to 340 (FNQP…FINN).

In Dictyostelium discoideum (Social amoeba), this protein is FNIP repeat-containing protein DDB_G0277323.